We begin with the raw amino-acid sequence, 493 residues long: Probable mannosyl-oligosaccharide alpha-1,2-mannosidase 1B (493 aa).

The N-terminal stretch at 1-18 is a signal peptide; the sequence is MHLPSLSVALALVSSSLA. Residues asparagine 87 and asparagine 174 are each glycosylated (N-linked (GlcNAc...) asparagine). A disulfide bond links cysteine 324 and cysteine 353. The Proton donor role is filled by glutamate 367. The N-linked (GlcNAc...) asparagine glycan is linked to asparagine 489.

It belongs to the glycosyl hydrolase 47 family. As to quaternary structure, monomer. It depends on Ca(2+) as a cofactor. Requires Mg(2+) as cofactor.

It localises to the cytoplasmic vesicle lumen. It carries out the reaction N(4)-(alpha-D-Man-(1-&gt;2)-alpha-D-Man-(1-&gt;2)-alpha-D-Man-(1-&gt;3)-[alpha-D-Man-(1-&gt;2)-alpha-D-Man-(1-&gt;3)-[alpha-D-Man-(1-&gt;2)-alpha-D-Man-(1-&gt;6)]-alpha-D-Man-(1-&gt;6)]-beta-D-Man-(1-&gt;4)-beta-D-GlcNAc-(1-&gt;4)-beta-D-GlcNAc)-L-asparaginyl-[protein] (N-glucan mannose isomer 9A1,2,3B1,2,3) + 4 H2O = N(4)-(alpha-D-Man-(1-&gt;3)-[alpha-D-Man-(1-&gt;3)-[alpha-D-Man-(1-&gt;6)]-alpha-D-Man-(1-&gt;6)]-beta-D-Man-(1-&gt;4)-beta-D-GlcNAc-(1-&gt;4)-beta-D-GlcNAc)-L-asparaginyl-[protein] (N-glucan mannose isomer 5A1,2) + 4 beta-D-mannose. The enzyme catalyses N(4)-(alpha-D-Man-(1-&gt;2)-alpha-D-Man-(1-&gt;2)-alpha-D-Man-(1-&gt;3)-[alpha-D-Man-(1-&gt;3)-[alpha-D-Man-(1-&gt;2)-alpha-D-Man-(1-&gt;6)]-alpha-D-Man-(1-&gt;6)]-beta-D-Man-(1-&gt;4)-beta-D-GlcNAc-(1-&gt;4)-beta-D-GlcNAc)-L-asparaginyl-[protein] (N-glucan mannose isomer 8A1,2,3B1,3) + 3 H2O = N(4)-(alpha-D-Man-(1-&gt;3)-[alpha-D-Man-(1-&gt;3)-[alpha-D-Man-(1-&gt;6)]-alpha-D-Man-(1-&gt;6)]-beta-D-Man-(1-&gt;4)-beta-D-GlcNAc-(1-&gt;4)-beta-D-GlcNAc)-L-asparaginyl-[protein] (N-glucan mannose isomer 5A1,2) + 3 beta-D-mannose. It functions in the pathway protein modification; protein glycosylation. Functionally, involved in the maturation of Asn-linked oligosaccharides. Progressively trims alpha-1,2-linked mannose residues from Man(9)GlcNAc(2) to produce Man(5)GlcNAc(2). The sequence is that of Probable mannosyl-oligosaccharide alpha-1,2-mannosidase 1B (mns1B) from Neosartorya fischeri (strain ATCC 1020 / DSM 3700 / CBS 544.65 / FGSC A1164 / JCM 1740 / NRRL 181 / WB 181) (Aspergillus fischerianus).